The sequence spans 356 residues: Heat-inducible transcription repressor HrcA (356 aa).

It belongs to the HrcA family.

Negative regulator of class I heat shock genes (grpE-dnaK-dnaJ and groELS operons). Prevents heat-shock induction of these operons. This is Heat-inducible transcription repressor HrcA from Bartonella henselae (strain ATCC 49882 / DSM 28221 / CCUG 30454 / Houston 1) (Rochalimaea henselae).